A 486-amino-acid polypeptide reads, in one-letter code: Cysteine--tRNA ligase (486 aa).

Cysteine 27 is a binding site for Zn(2+). The 'HIGH' region signature appears at 29–39 (PTTYNFIHLGN). Residues cysteine 207, histidine 232, and glutamate 236 each coordinate Zn(2+). The short motif at 264 to 268 (KMSKS) is the 'KMSKS' region element. Residue lysine 267 participates in ATP binding.

Belongs to the class-I aminoacyl-tRNA synthetase family. As to quaternary structure, monomer. The cofactor is Zn(2+).

It localises to the cytoplasm. It catalyses the reaction tRNA(Cys) + L-cysteine + ATP = L-cysteinyl-tRNA(Cys) + AMP + diphosphate. The polypeptide is Cysteine--tRNA ligase (Desulforamulus reducens (strain ATCC BAA-1160 / DSM 100696 / MI-1) (Desulfotomaculum reducens)).